The sequence spans 659 residues: Cyclic-di-AMP phosphodiesterase GdpP (659 aa).

At 1–8 (MPSFYEKP) the chain is on the cytoplasmic side. A run of 2 helical transmembrane segments spans residues 9–29 (LFRYPIYALIALSIITILISF) and 30–50 (YFNWILGTVEVLLLAVILFFI). The Cytoplasmic segment spans residues 51–659 (KRADSLIRQE…DEYFEGGVQR (609 aa)). Residues 84 to 149 (PIGIMLFNDQ…NDRKFRVVIK (66 aa)) form a PAS-like domain, required for heme-binding region. In terms of domain architecture, GGDEF spans 173–301 (ERTVLAYIFL…GGDQVAIKLP (129 aa)). A DHH domain region spans residues 339–496 (NVIIMGHKFP…IEATALLAGI (158 aa)). Mn(2+) is bound by residues histidine 345, aspartate 349, aspartate 351, aspartate 420, histidine 444, and aspartate 499. The tract at residues 591–646 (FAVARRDEQTVCISARSLGEVNVQIIMEALEGGGHLTNAATQLSGISVSEALERLK) is DHHA1 domain.

It belongs to the GdpP/PdeA phosphodiesterase family. Heme b serves as cofactor. The cofactor is Mg(2+). Requires Mn(2+) as cofactor.

The protein localises to the cell membrane. It catalyses the reaction 3',3'-c-di-AMP + H2O = 5'-O-phosphonoadenylyl-(3'-&gt;5')-adenosine + H(+). With respect to regulation, phosphodiesterase (PDE) inhibited by Zn(2+), Ca(2+) inhibits in the presence of Mg(2+) but not Mn(2+); c-di-AMP PDE activity is competitively inhibited by ppGpp. Heme binding (by Fe(2+) or Fe(3+) heme) inhibits PDE, activity is partially restored by KCN or NO only for Fe(2+) heme. Binding of NO to Fe(2+) heme switches from hexa- to pentacoordination. Heme binding inhibits the ATPase activity. Its function is as follows. Has phosphodiesterase (PDE) activity against cyclic-di-AMP (c-di-AMP) and to a much lesser extent against cyclic-di-GMP (c-di-GMP) in the DHH/DHHA1 domains. Also has ATPase activity, probably via the GGDEF domain. Overexpression leads to increased sensitivity to methyl methanesulfonate (MMS) and H(2)O(2). Overexpression leads to extreme sensitivity to the beta-lactam antibiotic cefuroxime (CEF), probably dependent on PDE activity. May monitor cellular heme or NO levels. In B.subtilis c-di-AMP is a second messenger that mediates growth, DNA repair and cell wall homeostasis; it is toxic when present in excess. In Bacillus subtilis (strain 168), this protein is Cyclic-di-AMP phosphodiesterase GdpP.